The chain runs to 161 residues: MADTDDIIDYESDDLTEYEDDEEDGESLETSDIDPKSSYKIVESTSTHIEDAHSNLKHIGNHISALKRRYTRRISLFEIAGIIAESYNLLQRGRLPLVSEFSDETMKQNMLHVIIQEIEEGSCPIVIEKNGELLSVNDFDKDGLKFHLDYIIKIWKLQKRY.

Positions 1-32 (MADTDDIIDYESDDLTEYEDDEEDGESLETSD) are enriched in acidic residues. The interval 1-35 (MADTDDIIDYESDDLTEYEDDEEDGESLETSDIDP) is disordered.

This sequence belongs to the poxviridae DNA-directed RNA polymerase 19 kDa subunit family. The DNA-dependent RNA polymerase used for intermediate and late genes expression consists of eight subunits Rpo30/OPG66, Rpo7/OPG90, Rpo22/OPG103, Rpo147/OPG105, Rpo18/OPG119, Rpo19/OPG131, Rpo132/OPG151 and Rpo35/OPG156. The same holoenzyme, with the addition of the transcription-specificity factor OPG109, is used for early gene expression.

The protein resides in the virion. It catalyses the reaction RNA(n) + a ribonucleoside 5'-triphosphate = RNA(n+1) + diphosphate. Its function is as follows. Part of the DNA-dependent RNA polymerase which catalyzes the transcription of viral DNA into RNA using the four ribonucleoside triphosphates as substrates. Responsible for the transcription of early, intermediate and late genes. DNA-dependent RNA polymerase associates with the early transcription factor (ETF), itself composed of OPG118 and OPG133, thereby allowing the early genes transcription. Late transcription, and probably also intermediate transcription, require newly synthesized RNA polymerase. This is DNA-directed RNA polymerase 19 kDa subunit (OPG131) from Monkeypox virus.